Reading from the N-terminus, the 576-residue chain is F-actin capping regulator BSP1 (576 aa).

The disordered stretch occupies residues 24 to 50; the sequence is RYSNIPSSKPAGEALSPVRSHNSGEYR. Residues Ser-46, Ser-79, and Ser-88 each carry the phosphoserine modification. 2 disordered regions span residues 132 to 160 and 173 to 316; these read NDSN…PREK and GRAD…KRIP. Ser-185 bears the Phosphoserine mark. The span at 191 to 206 shows a compositional bias: basic and acidic residues; the sequence is TRRDHIKITDGNEEKP. At Ser-220 the chain carries Phosphoserine. Composition is skewed to polar residues over residues 243–255 and 264–279; these read SRST…LSSL and KSYN…TVKS. Pro residues predominate over residues 304–313; that stretch reads KPTPPSPPAK. Residues Ser-309 and Ser-320 each carry the phosphoserine modification. The interval 408–470 is interaction with F-actin; sequence SIPEAIKGIQ…LSLRNNLKKR (63 aa). Residues 541–576 are disordered; sequence DKYTTSRDETVKETKPLVHPNKNRTRGPRRKLPTRV. The segment covering 544–556 has biased composition (basic and acidic residues); it reads TTSRDETVKETKP. An interaction with the F-actin capping complex region spans residues 547-576; that stretch reads RDETVKETKPLVHPNKNRTRGPRRKLPTRV. Residues 561–576 are compositionally biased toward basic residues; the sequence is NKNRTRGPRRKLPTRV.

Interacts (via C-terminus) with the CAP1-CAP2 F-actin capping protein complex. Interacts with INP52 (via SAC domain); the interaction is direct. Interacts with INP53 (via SAC domain); the interaction is direct. Interacts with RVS167. Interacts with SLA1. In terms of processing, phosphorylated by CDC28.

It is found in the cytoplasm. The protein resides in the cytoskeleton. The protein localises to the actin patch. Its subcellular location is the cell membrane. In terms of biological role, recruits the capping protein complex to actin patches and the actomyosin contractile ring, and/or stabilizes their interaction. May serve as an adapter to link INP52 and INP53 to the cortical actin cytoskeleton. Binds F-actin. This is F-actin capping regulator BSP1 (BSP1) from Saccharomyces cerevisiae (strain ATCC 204508 / S288c) (Baker's yeast).